Reading from the N-terminus, the 424-residue chain is GTPase HflX (424 aa).

Residues tyrosine 194–valine 364 enclose the Hflx-type G domain. Residues glycine 200–threonine 207, phenylalanine 225–serine 229, aspartate 246–glycine 249, asparagine 314–aspartate 317, and serine 342–alanine 344 contribute to the GTP site. Mg(2+) contacts are provided by threonine 207 and threonine 227.

It belongs to the TRAFAC class OBG-HflX-like GTPase superfamily. HflX GTPase family. In terms of assembly, monomer. Associates with the 50S ribosomal subunit. Mg(2+) is required as a cofactor.

It localises to the cytoplasm. Functionally, GTPase that associates with the 50S ribosomal subunit and may have a role during protein synthesis or ribosome biogenesis. The polypeptide is GTPase HflX (Thermofilum pendens (strain DSM 2475 / Hrk 5)).